A 244-amino-acid polypeptide reads, in one-letter code: Serine acetyltransferase (244 aa).

Belongs to the transferase hexapeptide repeat family.

It is found in the cytoplasm. The enzyme catalyses L-serine + acetyl-CoA = O-acetyl-L-serine + CoA. Its pathway is amino-acid biosynthesis; L-cysteine biosynthesis; L-cysteine from L-serine: step 1/2. This is Serine acetyltransferase (cysE) from Synechococcus elongatus (strain ATCC 33912 / PCC 7942 / FACHB-805) (Anacystis nidulans R2).